Consider the following 180-residue polypeptide: Small ribosomal subunit protein uS4 (180 aa).

The region spanning 103-165 is the S4 RNA-binding domain; sequence RRLQTIVYRK…KGSPFAKEGH (63 aa).

Belongs to the universal ribosomal protein uS4 family. As to quaternary structure, part of the 30S ribosomal subunit. Contacts protein S5. The interaction surface between S4 and S5 is involved in control of translational fidelity.

Its function is as follows. One of the primary rRNA binding proteins, it binds directly to 16S rRNA where it nucleates assembly of the body of the 30S subunit. Functionally, with S5 and S12 plays an important role in translational accuracy. This Thermococcus kodakarensis (strain ATCC BAA-918 / JCM 12380 / KOD1) (Pyrococcus kodakaraensis (strain KOD1)) protein is Small ribosomal subunit protein uS4.